Here is a 391-residue protein sequence, read N- to C-terminus: PPE family protein PPE15 (391 aa).

The tract at residues 312–367 is eukaryotic-like SH3 domain; it reads LGEATLVGRLSVPAAWSTAAPATTAGATALEGSGWTVAAEEAGPVTGMMPGMASAA.

This sequence belongs to the mycobacterial PPE family. As to quaternary structure, forms a heterodimer with PE8. The dimer forms a 1:1:1 heterotrimeric complex with EspG5. PPE15 interacts directly with EspG5. Interacts via the C-terminal region with host Toll-like receptor 4 (TLR4). Interacts, also via the C-terminal region, with two cytosolic subunits of the host NOX complex, p47phox (NCF1) and p67phox (NCF2).

The protein resides in the secreted. It localises to the host mitochondrion. Functionally, may play a critical role in the homeostasis of triacylglycerol-containing lipid droplets in M.tuberculosis and influence the entry of the pathogen into a dormant state. Is recognized by host TLR4 receptor at the macrophage cell surface, which modulates the host immune response, induces mitochondrial stress and perturbations, and induces macrophage apoptosis leading to pathogen persistence. Also downregulates NOX-mediated reactive oxygen species (ROS) generation in THP1 macrophages, which increases intracellular survival of bacteria. PPE15 interacts with two subunits of the host NADPH oxidase (NOX) complex in the cytosol of macrophages and prevents their migration to the membrane, which inhibits the assembly of the NOX complex at the plasma membrane of THP1 macrophages. This leads to reduced NOX activity and diminished ROS generation. This Mycobacterium tuberculosis (strain CDC 1551 / Oshkosh) protein is PPE family protein PPE15 (PPE15).